The sequence spans 449 residues: MFQTINEISIHPELYNQKKVLIQGWITNIRGNLKIIFVELNDGSSFKNLQCVLKKEFIDFDKIENLALGVAVEISGIFSNTPERQQFGEVLVETLEIKGNNYNTNFPIQNQEISLEVLRQMPHFRHRSRLFRAIMKLRSALFFEIHKFFRRQGFINFSAPILTSNDGEGAGEVFIVDDENKDFFNKKTTLGVTGQLHAEAYALGFKKVYTFAPTFRAERSNTRRHAAEFWMIEPEVAFFTLEQIIELAVKLLQKVIKSVIIRNKDEFIFLEKAGDKNLRKRLLQFCDSQVTQISYEKAIELLLEHQEKFEEKDLFFGCDLKTEHERFLTEEIFHMPVVIINYPKNLKAFYMHQNEDGQTVAAFDLLVPGIGELIGGSQREVRYEKLLARMNELNMNIEEFQWYLDLRKYGNPGSSGFGLGFERLLMYITGIENIRDVIPFPRTNKNILM.

It belongs to the class-II aminoacyl-tRNA synthetase family. Homodimer.

The protein resides in the cytoplasm. The catalysed reaction is tRNA(Asn) + L-asparagine + ATP = L-asparaginyl-tRNA(Asn) + AMP + diphosphate + H(+). This Mesomycoplasma hyopneumoniae (strain 7448) (Mycoplasma hyopneumoniae) protein is Asparagine--tRNA ligase.